The sequence spans 321 residues: MATH domain and coiled-coil domain-containing protein At3g58260 (321 aa).

Positions 6–135 constitute an MATH domain; sequence NNTFTWVIKN…NDEVMVAVAV (130 aa). A coiled-coil region spans residues 232-283; sequence KLDWLEKKLDELFEKKKEEADKIRMQNIEEELKDLRQKCSSLEALLKKEKTG.

The chain is MATH domain and coiled-coil domain-containing protein At3g58260 from Arabidopsis thaliana (Mouse-ear cress).